The chain runs to 553 residues: Dihydroxy-acid dehydratase (553 aa).

Aspartate 78 serves as a coordination point for Mg(2+). Position 119 (cysteine 119) interacts with [2Fe-2S] cluster. 2 residues coordinate Mg(2+): aspartate 120 and lysine 121. Lysine 121 is modified (N6-carboxylysine). Residue cysteine 193 coordinates [2Fe-2S] cluster. Residue glutamate 441 participates in Mg(2+) binding. Catalysis depends on serine 467, which acts as the Proton acceptor.

The protein belongs to the IlvD/Edd family. Homodimer. It depends on [2Fe-2S] cluster as a cofactor. Mg(2+) is required as a cofactor.

The enzyme catalyses (2R)-2,3-dihydroxy-3-methylbutanoate = 3-methyl-2-oxobutanoate + H2O. It carries out the reaction (2R,3R)-2,3-dihydroxy-3-methylpentanoate = (S)-3-methyl-2-oxopentanoate + H2O. The protein operates within amino-acid biosynthesis; L-isoleucine biosynthesis; L-isoleucine from 2-oxobutanoate: step 3/4. It participates in amino-acid biosynthesis; L-valine biosynthesis; L-valine from pyruvate: step 3/4. In terms of biological role, functions in the biosynthesis of branched-chain amino acids. Catalyzes the dehydration of (2R,3R)-2,3-dihydroxy-3-methylpentanoate (2,3-dihydroxy-3-methylvalerate) into 2-oxo-3-methylpentanoate (2-oxo-3-methylvalerate) and of (2R)-2,3-dihydroxy-3-methylbutanoate (2,3-dihydroxyisovalerate) into 2-oxo-3-methylbutanoate (2-oxoisovalerate), the penultimate precursor to L-isoleucine and L-valine, respectively. The polypeptide is Dihydroxy-acid dehydratase (Geobacter sulfurreducens (strain ATCC 51573 / DSM 12127 / PCA)).